The chain runs to 103 residues: MYAVFQSGGKQHRVSEGQTLRLEKLDVETGATVEFDNVLMIANGEEITVGAPLVAGGKVTAEVVQHGRGDKVKIVKFRRRKHSRKQQGHRQWFTEVKITGISA.

The protein belongs to the bacterial ribosomal protein bL21 family. In terms of assembly, part of the 50S ribosomal subunit. Contacts protein L20.

This protein binds to 23S rRNA in the presence of protein L20. The protein is Large ribosomal subunit protein bL21 of Aliivibrio fischeri (strain ATCC 700601 / ES114) (Vibrio fischeri).